The sequence spans 127 residues: Large ribosomal subunit protein uL24 (127 aa).

It belongs to the universal ribosomal protein uL24 family. In terms of assembly, part of the 50S ribosomal subunit.

In terms of biological role, one of two assembly initiator proteins, it binds directly to the 5'-end of the 23S rRNA, where it nucleates assembly of the 50S subunit. Functionally, one of the proteins that surrounds the polypeptide exit tunnel on the outside of the subunit. The protein is Large ribosomal subunit protein uL24 of Leptospira biflexa serovar Patoc (strain Patoc 1 / ATCC 23582 / Paris).